Reading from the N-terminus, the 327-residue chain is Transaldolase (327 aa).

Lys132 acts as the Schiff-base intermediate with substrate in catalysis.

Belongs to the transaldolase family. Type 1 subfamily. Homodimer.

It is found in the cytoplasm. It catalyses the reaction D-sedoheptulose 7-phosphate + D-glyceraldehyde 3-phosphate = D-erythrose 4-phosphate + beta-D-fructose 6-phosphate. The protein operates within carbohydrate degradation; pentose phosphate pathway; D-glyceraldehyde 3-phosphate and beta-D-fructose 6-phosphate from D-ribose 5-phosphate and D-xylulose 5-phosphate (non-oxidative stage): step 2/3. Its function is as follows. Transaldolase is important for the balance of metabolites in the pentose-phosphate pathway. In Chlamydia felis (strain Fe/C-56) (Chlamydophila felis), this protein is Transaldolase.